Here is a 914-residue protein sequence, read N- to C-terminus: Solute carrier family 12 member 9 (914 aa).

The Cytoplasmic portion of the chain corresponds to 1–36; the sequence is MASESSPLLAYRLLGEEGVALPANGAGGPGGASARK. A Phosphoserine modification is found at Ser-6. The helical transmembrane segment at 37-57 threads the bilayer; the sequence is LSTFLGVVVPTVLSMFSIVVF. Topologically, residues 58 to 72 are extracellular; the sequence is LRIGFVVGHAGLLQA. A helical membrane pass occupies residues 73-93; the sequence is LAMLLVAYFILALTVLSVCAI. Residues 94 to 119 are Cytoplasmic-facing; it reads ATNGAVQGGGAYFMISRTLGPEVGGS. Residues 120-140 form a helical membrane-spanning segment; that stretch reads IGLMFYLANVCGCAVSLLGLV. The Extracellular portion of the chain corresponds to 141 to 167; that stretch reads ESVLDVFGADATGPSGLRVLPQGYGWN. A helical transmembrane segment spans residues 168–188; the sequence is LLYGSLLLGLVGGVCTLGAGL. Topologically, residues 189–193 are cytoplasmic; it reads YARAS. The helical transmembrane segment at 194 to 214 threads the bilayer; the sequence is FLTFLLVSGSLASVLISFVAV. Topologically, residues 215–262 are extracellular; the sequence is GPRDIRLTPRPGPNGSSLPPRFGHFTGFNSSTLKDNLGAGYAEDYTTG. Residues Asn-228 and Asn-243 are each glycosylated (N-linked (GlcNAc...) asparagine). The chain crosses the membrane as a helical span at residues 263 to 283; that stretch reads AVMNFASVFAVLFNGCTGIMA. Over 284-297 the chain is Cytoplasmic; the sequence is GANMSGELKDPSRA. The helical transmembrane segment at 298 to 318 threads the bilayer; that stretch reads IPLGTIVAVAYTFFVYVLLFF. Over 319 to 338 the chain is Extracellular; that stretch reads LSSFTCDRTLLQEDYGFFRA. A helical membrane pass occupies residues 339-359; it reads ISLWPPLVLIGIYATALSASM. Over 360-390 the chain is Cytoplasmic; sequence SSLIGASRILHALARDDLFGVILAPAKVVSR. The chain crosses the membrane as a helical span at residues 391–411; it reads GGNPWAAVLYSWGLVQLVLLA. Over 412–416 the chain is Extracellular; sequence GKLNT. Residues 417–437 form a helical membrane-spanning segment; the sequence is LAAVVTVFYLVAYAAVDLSCL. The Cytoplasmic segment spans residues 438-466; sequence SLEWASAPNFRPTFSLFSWHTCLLGVASC. A helical membrane pass occupies residues 467–487; it reads LLMMFLISPGAAGGSLLLMGL. Topologically, residues 488 to 740 are extracellular; it reads LAALLTARGG…LLRPRGGPGY (253 aa). The segment at 642 to 678 is disordered; sequence LTDPAFSEPADSTREGSSPALSTLFPPPRAPGSPRAL. The helical transmembrane segment at 741–761 threads the bilayer; that stretch reads VDVCGLFLLQMATILGMVPAW. Residues 762 to 914 are Cytoplasmic-facing; sequence HSARLRIFLC…GVTPVTCTDL (153 aa). The segment at 844-863 is disordered; sequence QQGRGTGGGPGGPEGGDAEG. Gly residues predominate over residues 847–858; that stretch reads RGTGGGPGGPEG.

Belongs to the SLC12A transporter family. Interacts with SLC12A1. As to expression, highly expressed in placenta, brain and kidney. Lower expression in lung, liver and heart.

It localises to the cell membrane. It is found in the lysosome membrane. May be an inhibitor of SLC12A1. Seems to correspond to a subunit of a multimeric transport system and thus, additional subunits may be required for its function. May play a role in lysosomal ion flux and osmoregulation. This Homo sapiens (Human) protein is Solute carrier family 12 member 9 (SLC12A9).